Reading from the N-terminus, the 353-residue chain is O-antigen biosynthesis glycosyltransferase WclY (353 aa).

Residues 116–136 form a helical membrane-spanning segment; the sequence is SLIWGLLWCSIWLFFDKLVIL. 2 residues coordinate UDP: N190 and E271. The E(x7)E glycosyltransferase motif signature appears at 263–271; the sequence is EGFGLTVLE.

This sequence belongs to the glycosyltransferase group 1 family. Glycosyltransferase 4 subfamily.

It is found in the membrane. It functions in the pathway bacterial outer membrane biogenesis; LPS O-antigen biosynthesis. In terms of biological role, involved in the assembly of the O-repeating unit during O-antigen biosynthesis. N-acetylglucosamine transferase accountable for the alpha-D-GlcNAc-1,4-beta-D-Gal linkage within the O-antigen. The protein is O-antigen biosynthesis glycosyltransferase WclY of Escherichia coli.